Reading from the N-terminus, the 315-residue chain is Homeobox-leucine zipper protein HAT3 (315 aa).

The interval 140-163 (SCSLGGGSDDEDGSGNGDDSSRKK) is disordered. A DNA-binding region (homeobox) is located at residues 159-218 (SSRKKLRLSKEQALVLEETFKEHSTLNPKQKMALAKQLNLRTRQVEVWFQNRRARTKLKQ). A leucine-zipper region spans residues 226–247 (LKRCCENLTDENRRLQKEVSEL). Residues 280–305 (SSSSVAPPVMNSSSPMGPMSPWAAMP) are compositionally biased toward low complexity. Residues 280-315 (SSSSVAPPVMNSSSPMGPMSPWAAMPLRQRPAAGSH) form a disordered region.

Belongs to the HD-ZIP homeobox family. Class II subfamily.

The protein localises to the nucleus. Functionally, probable transcription factor. The sequence is that of Homeobox-leucine zipper protein HAT3 (HAT3) from Arabidopsis thaliana (Mouse-ear cress).